The primary structure comprises 133 residues: Small ribosomal subunit protein uS8 (133 aa).

It belongs to the universal ribosomal protein uS8 family. As to quaternary structure, part of the 30S ribosomal subunit. Contacts proteins S5 and S12.

Functionally, one of the primary rRNA binding proteins, it binds directly to 16S rRNA central domain where it helps coordinate assembly of the platform of the 30S subunit. The chain is Small ribosomal subunit protein uS8 from Micrococcus luteus (Micrococcus lysodeikticus).